A 432-amino-acid polypeptide reads, in one-letter code: Glutamate-1-semialdehyde 2,1-aminomutase (432 aa).

The residue at position 272 (Lys-272) is an N6-(pyridoxal phosphate)lysine.

This sequence belongs to the class-III pyridoxal-phosphate-dependent aminotransferase family. HemL subfamily. Homodimer. Pyridoxal 5'-phosphate is required as a cofactor.

The protein localises to the cytoplasm. It catalyses the reaction (S)-4-amino-5-oxopentanoate = 5-aminolevulinate. Its pathway is porphyrin-containing compound metabolism; protoporphyrin-IX biosynthesis; 5-aminolevulinate from L-glutamyl-tRNA(Glu): step 2/2. It participates in porphyrin-containing compound metabolism; chlorophyll biosynthesis. The polypeptide is Glutamate-1-semialdehyde 2,1-aminomutase (Trichodesmium erythraeum (strain IMS101)).